The following is an 896-amino-acid chain: Phycobiliprotein ApcE (896 aa).

Cys-190 contributes to the (2R,3E)-phycocyanobilin binding site. PBS-linker domains are found at residues 247-427 (DIQG…FRKV), 508-684 (LGAK…QRVD), and 703-881 (EPEI…KQDK).

It belongs to the phycobilisome linker protein family. As to quaternary structure, heterodimer of ApcF (a variant beta-allophycocyanin). Phycobilisomes of this organism are composed of a two cylinder core, from which six rods radiate. The core is mainly composed of allophycocyanin alpha and beta chains and of minor components. Post-translationally, contains one covalently linked bilin chromophore. This protein autochromophorylates.

It localises to the cellular thylakoid membrane. Its function is as follows. This protein is postulated to act both as terminal energy acceptor (by its phycobilin-like domains) and as a linker polypeptide (by its repeats and arms) that stabilizes the phycobilisome core architecture. Has intrinsic bilin lyase activity. The sequence is that of Phycobiliprotein ApcE (apcE) from Synechocystis sp. (strain ATCC 27184 / PCC 6803 / Kazusa).